Here is a 158-residue protein sequence, read N- to C-terminus: Protein EOLA1 (158 aa).

In terms of domain architecture, ASCH spans 6–92 (LSFRQPYAGF…IAGLVDIGET (87 aa)).

The protein belongs to the EOLA family. In terms of assembly, interacts with MT2A. Expressed primarily in heart, skeletal muscle, kidney, liver and placenta. Relatively high level of expression in spleen, colon and small intestine. Almost no expression in brain, thymus, lung and peripheral blood leukocytes. Expressed in epithelial cells (at protein level).

Its function is as follows. May play a role in cell protection during the inflammatory response. In epithelial cells, negatively regulates IL6 production and apoptosis through the regulation of MT2A expression. In Homo sapiens (Human), this protein is Protein EOLA1.